Here is an 82-residue protein sequence, read N- to C-terminus: Small ribosomal subunit protein bS16 (82 aa).

This sequence belongs to the bacterial ribosomal protein bS16 family.

This chain is Small ribosomal subunit protein bS16, found in Actinobacillus pleuropneumoniae serotype 5b (strain L20).